Consider the following 123-residue polypeptide: Small ribosomal subunit protein uS12 (123 aa).

Aspartate 89 carries the post-translational modification 3-methylthioaspartic acid.

Belongs to the universal ribosomal protein uS12 family. As to quaternary structure, part of the 30S ribosomal subunit. Contacts proteins S8 and S17. May interact with IF1 in the 30S initiation complex.

With S4 and S5 plays an important role in translational accuracy. In terms of biological role, interacts with and stabilizes bases of the 16S rRNA that are involved in tRNA selection in the A site and with the mRNA backbone. Located at the interface of the 30S and 50S subunits, it traverses the body of the 30S subunit contacting proteins on the other side and probably holding the rRNA structure together. The combined cluster of proteins S8, S12 and S17 appears to hold together the shoulder and platform of the 30S subunit. The polypeptide is Small ribosomal subunit protein uS12 (Mesorhizobium japonicum (strain LMG 29417 / CECT 9101 / MAFF 303099) (Mesorhizobium loti (strain MAFF 303099))).